The sequence spans 417 residues: Serine hydroxymethyltransferase (417 aa).

N6-acetyllysine is present on lysine 54. Residues leucine 121 and glycine 125–leucine 127 contribute to the (6S)-5,6,7,8-tetrahydrofolate site. Residue lysine 229 is modified to N6-(pyridoxal phosphate)lysine. Residues lysine 250, lysine 285, and lysine 354 each carry the N6-acetyllysine modification. Serine 355–phenylalanine 357 is a (6S)-5,6,7,8-tetrahydrofolate binding site. Position 375 is an N6-acetyllysine (lysine 375).

The protein belongs to the SHMT family. In terms of assembly, homodimer. It depends on pyridoxal 5'-phosphate as a cofactor.

It is found in the cytoplasm. The enzyme catalyses (6R)-5,10-methylene-5,6,7,8-tetrahydrofolate + glycine + H2O = (6S)-5,6,7,8-tetrahydrofolate + L-serine. Its pathway is one-carbon metabolism; tetrahydrofolate interconversion. It functions in the pathway amino-acid biosynthesis; glycine biosynthesis; glycine from L-serine: step 1/1. Functionally, catalyzes the reversible interconversion of serine and glycine with tetrahydrofolate (THF) serving as the one-carbon carrier. This reaction serves as the major source of one-carbon groups required for the biosynthesis of purines, thymidylate, methionine, and other important biomolecules. Also exhibits THF-independent aldolase activity toward beta-hydroxyamino acids, producing glycine and aldehydes, via a retro-aldol mechanism. This Escherichia coli O17:K52:H18 (strain UMN026 / ExPEC) protein is Serine hydroxymethyltransferase.